We begin with the raw amino-acid sequence, 365 residues long: UDP-N-acetylglucosamine--N-acetylmuramyl-(pentapeptide) pyrophosphoryl-undecaprenol N-acetylglucosamine transferase (365 aa).

UDP-N-acetyl-alpha-D-glucosamine contacts are provided by residues threonine 13 to glycine 15, asparagine 125, arginine 165, serine 192, and glutamine 293.

Belongs to the glycosyltransferase 28 family. MurG subfamily.

Its subcellular location is the cell inner membrane. The enzyme catalyses di-trans,octa-cis-undecaprenyl diphospho-N-acetyl-alpha-D-muramoyl-L-alanyl-D-glutamyl-meso-2,6-diaminopimeloyl-D-alanyl-D-alanine + UDP-N-acetyl-alpha-D-glucosamine = di-trans,octa-cis-undecaprenyl diphospho-[N-acetyl-alpha-D-glucosaminyl-(1-&gt;4)]-N-acetyl-alpha-D-muramoyl-L-alanyl-D-glutamyl-meso-2,6-diaminopimeloyl-D-alanyl-D-alanine + UDP + H(+). Its pathway is cell wall biogenesis; peptidoglycan biosynthesis. In terms of biological role, cell wall formation. Catalyzes the transfer of a GlcNAc subunit on undecaprenyl-pyrophosphoryl-MurNAc-pentapeptide (lipid intermediate I) to form undecaprenyl-pyrophosphoryl-MurNAc-(pentapeptide)GlcNAc (lipid intermediate II). This is UDP-N-acetylglucosamine--N-acetylmuramyl-(pentapeptide) pyrophosphoryl-undecaprenol N-acetylglucosamine transferase from Ruegeria pomeroyi (strain ATCC 700808 / DSM 15171 / DSS-3) (Silicibacter pomeroyi).